The chain runs to 633 residues: Endosomal/prevacuolar sodium/hydrogen exchanger (633 aa).

A signal peptide spans 1 to 21; it reads MLSKVLLNIAFKVLLTTAKRA. Residues 22-61 lie on the Lumenal side of the membrane; that stretch reads VDPDDDDELLPSPDLPGSDDPIAGDPDVDLNPVTEEMFSS. Residues 25 to 44 form a disordered region; the sequence is DDDDELLPSPDLPGSDDPIA. Low complexity predominate over residues 31-42; that stretch reads LPSPDLPGSDDP. A helical transmembrane segment spans residues 62-82; it reads WALFIMLLLLISALWSSYYLT. Topologically, residues 83-85 are cytoplasmic; the sequence is QKR. Residues 86–106 form a helical membrane-spanning segment; sequence IRAVHETVLSIFYGMVIGLII. Over 107–117 the chain is Lumenal; that stretch reads RMSPGHYIQDT. The chain crosses the membrane as a helical span at residues 118 to 138; the sequence is VTFNSSYFFNVLLPPIILNSG. The Amiloride-binding motif lies at 124 to 133; sequence YFFNVLLPPI. The Cytoplasmic segment spans residues 139 to 152; sequence YELNQVNFFNNMLS. The chain crosses the membrane as a helical span at residues 153 to 173; that stretch reads ILIFAIPGTFISAVVIGIILY. Topologically, residues 174–189 are lumenal; the sequence is IWTFLGLESIDISFAD. The helical transmembrane segment at 190–211 threads the bilayer; the sequence is AMSVGATLSATDPVTILSIFNA. Residues 212 to 217 are Cytoplasmic-facing; the sequence is YKVDPK. Residues 218–238 form a helical membrane-spanning segment; sequence LYTIIFGESLLNDAISIVMFE. Topologically, residues 239 to 258 are lumenal; it reads TCQKFHGQPATFSSVFEGAG. The chain crosses the membrane as a helical span at residues 259–279; it reads LFLMTFSVSLLIGVLIGILVA. Topologically, residues 280-288 are cytoplasmic; sequence LLLKHTHIR. Residues 289–308 traverse the membrane as a helical segment; the sequence is RYPQIESCLILLIAYESYFF. The Lumenal portion of the chain corresponds to 309 to 313; that stretch reads SNGCH. Residues 314-333 traverse the membrane as a helical segment; that stretch reads MSGIVSLLFCGITLKHYAYY. At 334–344 the chain is on the cytoplasmic side; the sequence is NMSRRSQITIK. The chain crosses the membrane as a helical span at residues 345 to 364; that stretch reads YIFQLLARLSENFIFIYLGL. Residues 365–376 lie on the Cytoplasmic side of the membrane; the sequence is ELFTEVELVYKP. A helical membrane pass occupies residues 377–397; the sequence is LLIIVAAISICVARWCAVFPL. Residues 398–431 lie on the Lumenal side of the membrane; it reads SQFVNWIYRVKTIRSMSGITGENISVPDEIPYNY. N-linked (GlcNAc...) asparagine glycosylation is present at asparagine 420. Residues 432–452 form a helical membrane-spanning segment; sequence QMMTFWAGLRGAVGVALALGI. Over 453 to 457 the chain is Cytoplasmic; sequence QGEYK. The helical transmembrane segment at 458 to 478 threads the bilayer; sequence FTLLATVLVVVVLTVIIFGGT. Phosphothreonine is present on threonine 490. Phosphoserine is present on serine 494. Position 498 is a phosphothreonine (threonine 498). Residue serine 499 is modified to Phosphoserine. Residues asparagine 515, asparagine 550, and asparagine 563 are each glycosylated (N-linked (GlcNAc...) asparagine). The interval 553–578 is disordered; the sequence is TTGGNTFGGLNETENTSPNPARSSMD. Polar residues predominate over residues 564–574; that stretch reads ETENTSPNPAR. The residue at position 569 (serine 569) is a Phosphoserine.

The protein belongs to the monovalent cation:proton antiporter 1 (CPA1) transporter (TC 2.A.36) family. As to quaternary structure, interacts with CYP6.

It is found in the endosome membrane. The protein localises to the prevacuolar compartment membrane. Endosomal/prevacuolar electroneutral Na(+)/H(+) exchanger which mediates intracellular sequestration of Na(+) cations, regulates vacuolar pH and contributes to osmotolerance following sudden exposure to hyperosmotic media. Also contributes to the postdiauxic/stationary phase resistance to osmotic stress and allows for the continued growth of cells until the acquired osmotolerance response can occur. Involved in hygromycin resistance probably through its influence on the electrochemical proton gradient affecting secondarily the entrance of hygromycin. Mediates pH-dependent vesicle trafficking out of the endosome. Contributes to K(+) sequestration and homeostasis. This Saccharomyces cerevisiae (strain ATCC 204508 / S288c) (Baker's yeast) protein is Endosomal/prevacuolar sodium/hydrogen exchanger (NHX1).